The primary structure comprises 415 residues: Serine--tRNA ligase (415 aa).

231–233 (TAE) provides a ligand contact to L-serine. 262–264 (RSE) is an ATP binding site. E285 is a binding site for L-serine. Position 349–352 (349–352 (EISS)) interacts with ATP. S383 serves as a coordination point for L-serine.

Belongs to the class-II aminoacyl-tRNA synthetase family. Type-1 seryl-tRNA synthetase subfamily. Homodimer. The tRNA molecule binds across the dimer.

Its subcellular location is the cytoplasm. The catalysed reaction is tRNA(Ser) + L-serine + ATP = L-seryl-tRNA(Ser) + AMP + diphosphate + H(+). The enzyme catalyses tRNA(Sec) + L-serine + ATP = L-seryl-tRNA(Sec) + AMP + diphosphate + H(+). Its pathway is aminoacyl-tRNA biosynthesis; selenocysteinyl-tRNA(Sec) biosynthesis; L-seryl-tRNA(Sec) from L-serine and tRNA(Sec): step 1/1. Its function is as follows. Catalyzes the attachment of serine to tRNA(Ser). Is also able to aminoacylate tRNA(Sec) with serine, to form the misacylated tRNA L-seryl-tRNA(Sec), which will be further converted into selenocysteinyl-tRNA(Sec). The chain is Serine--tRNA ligase from Helicobacter pylori (strain HPAG1).